The sequence spans 182 residues: Large ribosomal subunit protein uL5c (182 aa).

The protein belongs to the universal ribosomal protein uL5 family. In terms of assembly, part of the 50S ribosomal subunit; contacts the 5S rRNA.

Its subcellular location is the plastid. It is found in the chloroplast. In terms of biological role, binds 5S rRNA, forms part of the central protuberance of the 50S subunit. The chain is Large ribosomal subunit protein uL5c (rpl5) from Cyanidium caldarium (Red alga).